The chain runs to 515 residues: MVLIAACILSKTGKLLVARQFVNDMMRSRLEGLVDAFPKLIGNEKEAATRQHTFVETDSVRYVYHPLDNIYLVLVTTKNSNILEDLETLRLFVRVIPEYCRSNEEKEILAHDFDLIFAFDEVVTLGYRESVNLAQIRTFTEMDSHEERVFMQIKEAQEKAAKQAMAEKAKELKRAQKEALSRGLKPSYQSSTGISSSSTPNAAAVSEPAAPRPSAPKGPIGGGKALKLGGKTNNEDDFLDTLRQQGQSIAPVQKASLSGGVSSLAAPISTAPRVKREVVHVRTEEKINTRVSRDGGLESGEVQATVTLSIGSPEFIPISIKMNNGSAAGTQLQVHPNLDKKEWQSSSTLKIKPNGKPYPVNSDVGILKWKMALSEEEQLPISFNCWPQESSDGVQVNIEYTLQREDITLNNVRIIVPLPTATAPSVGECDGEYEYHKTKNVIVWSLAVIDSSNSSGTLEFSVPNGHCDHFFPVSVGFTSENLFVPITVQKVVKNDGSPVTYSVETTFNSENFEIV.

Residues 161 to 180 (AKQAMAEKAKELKRAQKEAL) are compositionally biased toward basic and acidic residues. The disordered stretch occupies residues 161–231 (AKQAMAEKAK…GGKALKLGGK (71 aa)). The span at 187-198 (SYQSSTGISSSS) shows a compositional bias: low complexity. One can recognise an MHD domain in the interval 276–515 (REVVHVRTEE…TFNSENFEIV (240 aa)).

The protein belongs to the adaptor complexes medium subunit family. Delta-COP subfamily. As to quaternary structure, oligomeric complex that consists of at least the alpha, beta, beta', gamma, delta, epsilon and zeta subunits.

It localises to the cytoplasm. It is found in the golgi apparatus membrane. The protein localises to the cytoplasmic vesicle. Its subcellular location is the COPI-coated vesicle membrane. In terms of biological role, the coatomer is a cytosolic protein complex that binds to dilysine motifs and reversibly associates with Golgi non-clathrin-coated vesicles, which further mediate biosynthetic protein transport from the ER, via the Golgi up to the trans Golgi network. Coatomer complex is required for budding from Golgi membranes, and is essential for the retrograde Golgi-to-ER transport of dilysine-tagged proteins. The chain is Probable coatomer subunit delta from Caenorhabditis elegans.